Reading from the N-terminus, the 367-residue chain is tRNA/tmRNA (uracil-C(5))-methyltransferase (367 aa).

Residues Gln-190, Tyr-218, Asn-223, Glu-239, and Asp-299 each contribute to the S-adenosyl-L-methionine site. The active-site Nucleophile is Cys-324. The active-site Proton acceptor is Glu-358.

Belongs to the class I-like SAM-binding methyltransferase superfamily. RNA M5U methyltransferase family. TrmA subfamily.

The enzyme catalyses uridine(54) in tRNA + S-adenosyl-L-methionine = 5-methyluridine(54) in tRNA + S-adenosyl-L-homocysteine + H(+). The catalysed reaction is uridine(341) in tmRNA + S-adenosyl-L-methionine = 5-methyluridine(341) in tmRNA + S-adenosyl-L-homocysteine + H(+). Its function is as follows. Dual-specificity methyltransferase that catalyzes the formation of 5-methyluridine at position 54 (m5U54) in all tRNAs, and that of position 341 (m5U341) in tmRNA (transfer-mRNA). The chain is tRNA/tmRNA (uracil-C(5))-methyltransferase from Musicola paradisiaca (strain Ech703) (Dickeya paradisiaca).